Here is a 554-residue protein sequence, read N- to C-terminus: Valerianol synthase TPS8 (554 aa).

The short motif at 288 to 292 is the DDXXD motif element; that stretch reads QHSVG. Residues Asp307, Asp311, Asp452, Ser456, and Glu460 each coordinate Mg(2+).

This sequence belongs to the terpene synthase family. Mg(2+) is required as a cofactor.

It carries out the reaction (2E,6E)-farnesyl diphosphate + H2O = valerianol + diphosphate. The protein operates within secondary metabolite biosynthesis; terpenoid biosynthesis. Terpene synthase that catalyzes the biosynthesis of the terpene valerianol. In Camellia sinensis (Tea plant), this protein is Valerianol synthase TPS8.